A 594-amino-acid polypeptide reads, in one-letter code: Cationic amino acid transporter 1 (594 aa).

Position 2 is an N-acetylalanine (Ala2). At 2–78 the chain is on the cytoplasmic side; the sequence is ASGGGDDGLR…EMKKTLTWWD (77 aa). The chain crosses the membrane as a helical span at residues 79-99; the sequence is LMWFGIGAVIGSGIFVLTGLE. Residues 100 to 104 are Extracellular-facing; sequence ARNHS. An N-linked (GlcNAc...) asparagine glycan is attached at Asn102. A helical transmembrane segment spans residues 105-125; sequence GPAVVLSYVVSGVSAMLSVFC. Residues 126–149 lie on the Cytoplasmic side of the membrane; it reads YTEFAVEIPVAGGSFAYLRVELGD. Residues 150 to 170 form a helical membrane-spanning segment; that stretch reads FMAFIAAGNIILEYVVGGAAV. Residues 171 to 201 are Extracellular-facing; it reads ARSWTSYFATLLNHKPEDFRIIVHKLGEDYS. A helical transmembrane segment spans residues 202–222; it reads HLDPIAVGVCAIICVLAVVGT. Topologically, residues 223-227 are cytoplasmic; it reads KGSSR. Residues 228–248 form a helical membrane-spanning segment; it reads FNYIASIIHMVVILFVIIAGF. Residues 249 to 266 lie on the Extracellular side of the membrane; it reads TKADVKNYSDFTPYGVRG. An N-linked (GlcNAc...) asparagine glycan is attached at Asn255. The helical transmembrane segment at 267–287 threads the bilayer; the sequence is VFKSAAVLFFAYIGFDAVSTM. At 288–297 the chain is on the cytoplasmic side; that stretch reads AEETKNPGRD. A helical membrane pass occupies residues 298-318; sequence IPIGLVGSMVVTTVCYCLMAV. Topologically, residues 319–348 are extracellular; that stretch reads TLCLMQPYQQIDPDAPFSVAFSAVGWDWAK. Residues 349–369 form a helical membrane-spanning segment; that stretch reads YIVAFGALKGMTTVLLVGAIG. Topologically, residues 370–393 are cytoplasmic; it reads QARYMTHIARAHMMPPWLAQVNAK. A helical transmembrane segment spans residues 394–414; the sequence is TGTPINATVVMLAATALIAFF. Residues 415-418 are Extracellular-facing; that stretch reads TKLK. Residues 419–439 traverse the membrane as a helical segment; sequence ILADLLSVSTLFIFMFVAVAL. Residues 440–457 are Cytoplasmic-facing; sequence LVRRYYVTGETSTRDRNK. Residues 458-478 form a helical membrane-spanning segment; the sequence is FLVFLGLILASSTATAVYWAL. At 479–483 the chain is on the extracellular side; that stretch reads EEEGW. Residues 484–504 traverse the membrane as a helical segment; it reads IGYCITVPIWFLSTVAMKFLV. Topologically, residues 505–511 are cytoplasmic; it reads PQARAPK. A helical transmembrane segment spans residues 512–532; sequence IWGVPLVPWLPSASIAINIFL. Over 533–543 the chain is Extracellular; it reads LGSIDTKSFVR. Residues 544-564 traverse the membrane as a helical segment; the sequence is FAIWTGILLIYYVLFGLHATY. Over 565-594 the chain is Cytoplasmic; sequence DTAKATLKEKQALQKAEEGGVVADNSCSAT.

Belongs to the amino acid-polyamine-organocation (APC) superfamily. Cationic amino acid transporter (CAT) (TC 2.A.3.3) family. Expressed in roots, stems, flowers, petioles, seeds, siliques, and leaves. Mostly present in major veins.

The protein localises to the membrane. Its activity is regulated as follows. Inhibited by the protonophore 2,4-dinitrophenol. Functionally, high-affinity permease involved in the transport of the cationic amino acids (e.g. arginine, lysine, histidine, citrulline, valine, and glutamate). Transport mostly basic amino acids, and, to a lower extent neutral and acidic amino acids. May function as a proton symporter. The protein is Cationic amino acid transporter 1 (CAT1) of Arabidopsis thaliana (Mouse-ear cress).